The sequence spans 221 residues: MNITKIDWQKVNGLLPVIIQNISTREVLMLGYMNEEALTKTIKERKVTFFSRTKQRLWTKGEISGNFLNVEEMSLDCDNDTLLILVDPIGATCHTGEYSCFHQFTSPQSENKKQQFANWAWFIKLEQHLKEKKNADPSNSYTATLHAKGTKKIAQKVGEEGVETALAAVAQDKAEVISEATDLVYHLTVLLHNQDLQWYEIIAKLQERHQGIGLHPEGGNK.

The phosphoribosyl-AMP cyclohydrolase stretch occupies residues 1–121; the sequence is MNITKIDWQK…KKQQFANWAW (121 aa). Residues 122 to 221 are phosphoribosyl-ATP pyrophosphohydrolase; sequence FIKLEQHLKE…IGLHPEGGNK (100 aa).

In the N-terminal section; belongs to the PRA-CH family. It in the C-terminal section; belongs to the PRA-PH family.

The protein resides in the cytoplasm. The catalysed reaction is 1-(5-phospho-beta-D-ribosyl)-ATP + H2O = 1-(5-phospho-beta-D-ribosyl)-5'-AMP + diphosphate + H(+). It carries out the reaction 1-(5-phospho-beta-D-ribosyl)-5'-AMP + H2O = 1-(5-phospho-beta-D-ribosyl)-5-[(5-phospho-beta-D-ribosylamino)methylideneamino]imidazole-4-carboxamide. It participates in amino-acid biosynthesis; L-histidine biosynthesis; L-histidine from 5-phospho-alpha-D-ribose 1-diphosphate: step 2/9. Its pathway is amino-acid biosynthesis; L-histidine biosynthesis; L-histidine from 5-phospho-alpha-D-ribose 1-diphosphate: step 3/9. The sequence is that of Histidine biosynthesis bifunctional protein HisIE (hisI) from Haemophilus influenzae (strain ATCC 51907 / DSM 11121 / KW20 / Rd).